The chain runs to 261 residues: Thioredoxin-like protein HCF164, chloroplastic (261 aa).

A chloroplast-targeting transit peptide spans 1-40 (MARLVFSLNLPSSHGFNLSPRNLQSFFVTQTGAPRFRAVR). Positions 39–91 (VRCKPNPESSETKQEKLVIDNGETSSASKEVESSSSVADSSSSSSSGFPESPN) are disordered. Positions 63–84 (SSASKEVESSSSVADSSSSSSS) are enriched in low complexity. The Thioredoxin domain maps to 101-229 (VTVIAALSLF…LVENVNALAA (129 aa)). Catalysis depends on nucleophile residues Cys-150 and Cys-153. Residues Cys-150 and Cys-153 are joined by a disulfide bond.

This sequence belongs to the thioredoxin family. Interacts in vitro with LTO1.

The protein resides in the plastid. Its subcellular location is the chloroplast thylakoid membrane. Its function is as follows. Thiol-disulfide oxidoreductase that participates in various redox reactions in the chloroplast. Mediates the reduction of PSI-N in the thylakoid lumen. May interact and probably reduce other target proteins of the thylakoid membrane, such as FTSH2, FTSH8, LHCB5, atpA, atpB, atpE, petA and petC. Involved in the biogenesis of the plastid cytochrome b6f complex. Reducing equivalents are provided by stromal M-type thioredoxins and probably transduced through the thylakoid membrane by CCDA. Possesses low insulin disulfide bonds reducing activity. This is Thioredoxin-like protein HCF164, chloroplastic from Arabidopsis thaliana (Mouse-ear cress).